Consider the following 519-residue polypeptide: MSASSSSALPPLVPALYRWKSTGSSGRQVQRRCVGAEAIVGLEEKNRRALYDLYIATSLRNIAPASTLLTLQNLKEMFELALLDARFEHPECACTVSWDDEVPAIITYESPESNESARDWARGCIHVQPTAKSALDLWSEMEEGRAAANDNTPSKSIELFLLSDVSTDSTPIPQDATVEILFHSNHLFWDGIGCRKFVGDLFRLVGSYIGRSDSREMKKIQWGQEIKNLSPPVVDSLKLDINTLGSEFDDKCTEYTSALVANYKSRGMKFQPGLALPRCVIHKLSADESIAIVKAVKTRLGPGFTISHLTQAAIVLALLDHLKPNDLSDDEVFISPTSVDGRRWLREDIASNFYAMCQTAAVVRIENLKSIAVSHKDEKELQVRALESACRNIKKSYRQWLENPFLQALGLRVHNFEASYLHAKPIPFEGEANPLFISDGINERFIPHEIKQTATGENVLSVESIDFVVNQSLPYLAIRLDSWRDASTLNIIYNDANYTEAEVQKYLQSIVEFMLAFRL.

Position 414 (histidine 414) interacts with 15-deacetylcalonectrin.

Belongs to the trichothecene O-acetyltransferase family.

It functions in the pathway sesquiterpene biosynthesis; trichothecene biosynthesis. Functionally, 15-O-acetyltransferase; part of the core gene cluster that mediates the biosynthesis of trichothecenes, a very large family of chemically related bicyclic sesquiterpene compounds acting as mycotoxins, including T2-toxin. The biosynthesis of trichothecenes begins with the cyclization of farnesyl diphosphate to trichodiene and is catalyzed by the trichodiene synthase TRI5. Trichodiene undergoes a series of oxygenations catalyzed by the cytochrome P450 monooxygenase TRI4. TRI4 controls the addition of four oxygens at C-2, C-3, C-11, and the C-12, C-13-epoxide to form the intermediate isotrichotriol. Isotrichotriol then undergoes a non-enzymatic isomerization and cyclization to form isotrichodermol. During this process, the oxygen at the C-2 position becomes the pyran ring oxygen and the hydroxyl group at C-11 is lost. More complex type A trichothecenes are built by modifying isotrichodermol through a series of paired hydroxylation and acetylation or acylation steps. Isotrichodermol is converted to isotrichodermin by the acetyltransferase TRI101. TRI101 encodes a C-3 transacetylase that acts as a self-protection or resistance factor during biosynthesis and that the presence of a free C-3 hydroxyl group is a key component of Fusarium trichothecene phytotoxicity. A second hydroxyl group is added to C-15 by the trichothecene C-15 hydroxylase TRI11, producing 15-decalonectrin, which is then acetylated by TRI3, producing calonectrin. A third hydroxyl group is added at C-4 by the cytochrome P450 monooxygenase TRI13, converting calonectrin to 3,15-diacetoxyspirpenol, which is subsequently acetylated by the acetyltransferase TRI7. A fourth hydroxyl group is added to C-8 by the cytochrome P450 monooxygenase TRI1, followed by the addition of an isovaleryl moiety by TRI16. Finally, the acetyl group is removed from the C-3 position by the trichothecene C-3 esterase TRI8 to produce T-2 toxin. In Fusarium sporotrichioides, this protein is Trichothecene 15-O-acetyltransferase TRI3.